The following is a 355-amino-acid chain: Chromatin modification-related protein EAF3 (355 aa).

Residues 3 to 77 (EVGGKCLAYH…WDEWVSVDRI (75 aa)) enclose the Tudor-knot domain. The tract at residues 98–150 (ASLAQQQKTKNGGSAKRGGGGAHSESNHGGRRSGSGDRRDSNAEERGIVPSEG) is disordered. The segment covering 131-144 (GSGDRRDSNAEERG) has biased composition (basic and acidic residues). The 191-residue stretch at 163-353 (SRNKLRIHIP…TSSQYEGVAL (191 aa)) folds into the MRG domain.

This sequence belongs to the MRG family. Component of the NuA4 histone acetyltransferase complex.

It is found in the nucleus. Its function is as follows. Involved in deacetylation of histones, chromatin assembly and chromosome segregation. May act as a transcriptional oscillator, directing histone deacetylases to specific chromosomal domains. Component of the NuA4 histone acetyltransferase complex which is involved in transcriptional activation of selected genes principally by acetylation of nucleosomal histone H4 and H2A. The NuA4 complex is also involved in DNA repair. In Candida glabrata (strain ATCC 2001 / BCRC 20586 / JCM 3761 / NBRC 0622 / NRRL Y-65 / CBS 138) (Yeast), this protein is Chromatin modification-related protein EAF3 (EAF3).